The following is a 144-amino-acid chain: Large ribosomal subunit protein uL16 (144 aa).

It belongs to the universal ribosomal protein uL16 family. In terms of assembly, part of the 50S ribosomal subunit.

Its function is as follows. Binds 23S rRNA and is also seen to make contacts with the A and possibly P site tRNAs. The chain is Large ribosomal subunit protein uL16 from Halalkalibacterium halodurans (strain ATCC BAA-125 / DSM 18197 / FERM 7344 / JCM 9153 / C-125) (Bacillus halodurans).